Reading from the N-terminus, the 245-residue chain is Probable phosphatase CKO_02035 (245 aa).

9 residues coordinate Zn(2+): His7, His9, His15, His40, Glu73, His101, His131, Asp192, and His194.

This sequence belongs to the PHP family. As to quaternary structure, homotrimer. The cofactor is Zn(2+).

The protein is Probable phosphatase CKO_02035 of Citrobacter koseri (strain ATCC BAA-895 / CDC 4225-83 / SGSC4696).